The primary structure comprises 387 residues: Low specificity L-threonine aldolase (387 aa).

The residue at position 213 (lysine 213) is an N6-(pyridoxal phosphate)lysine. Residue lysine 228 forms a Glycyl lysine isopeptide (Lys-Gly) (interchain with G-Cter in ubiquitin) linkage. Serine 367 and serine 369 each carry phosphoserine. Threonine 370 carries the post-translational modification Phosphothreonine.

This sequence belongs to the threonine aldolase family. As to quaternary structure, homotetramer. Pyridoxal 5'-phosphate is required as a cofactor.

It catalyses the reaction L-threonine = acetaldehyde + glycine. It carries out the reaction L-allo-threonine = acetaldehyde + glycine. Its pathway is amino-acid biosynthesis; glycine biosynthesis; glycine from L-allo-threonine: step 1/1. The protein operates within amino-acid degradation; L-threonine degradation via aldolase pathway; acetaldehyde and glycine from L-threonine: step 1/1. Functionally, catalyzes the cleavage of L-allo-threonine and L-threonine to glycine and acetaldehyde. The polypeptide is Low specificity L-threonine aldolase (GLY1) (Saccharomyces cerevisiae (strain ATCC 204508 / S288c) (Baker's yeast)).